Consider the following 543-residue polypeptide: ADP,ATP carrier protein 3 (543 aa).

10 consecutive transmembrane segments (helical) span residues 46–66 (VLYL…MGNL), 86–106 (IFLP…LSLF), 111–131 (MFDI…LVVW), 175–195 (FLFL…FNIF), 209–229 (ISVY…LTLV), 243–263 (ELGF…ILAL), 306–326 (LLIA…LVEA), 346–366 (FANF…LVVI), 382–402 (LASL…LIAF), and 504–524 (SVSG…LKYL).

Belongs to the ADP/ATP translocase tlc family.

The protein resides in the mitosome membrane. Its function is as follows. ATP transporter involved in the uptake of ATP from the parasite cell cytoplasm into the mitosome matrix. Equilibrates nucleotide pools across a concentration gradient between both sides of the mitosome membrane. This chain is ADP,ATP carrier protein 3 (NTT3), found in Encephalitozoon cuniculi (strain GB-M1) (Microsporidian parasite).